The chain runs to 95 residues: Alpha-conotoxin PiXXA (95 aa).

The signal sequence occupies residues 1–24; sequence MPKLEMMLLVLLILPLPYFDAAGG. Residues 25–45 constitute a propeptide that is removed on maturation; sequence QSVHVDGYGDGLARYLQRGER. P56 is modified (4-hydroxyproline). Cystine bridges form between C64–C73, C69–C81, C74–C91, and C79–C93.

The protein belongs to the conotoxin D superfamily. Homodimer; disulfide-linked. Post-translationally, the homodimer contains 10 disulfide bonds. Expressed by the venom duct.

It localises to the secreted. In terms of biological role, alpha-conotoxins act on postsynaptic membranes, they bind to the nicotinic acetylcholine receptors (nAChR) and thus inhibit them. Through its two C-terminal domains, this homodimeric protein would bind to two nAChR allosteric sites, located outside the nAChR C-loop of the principal binding face and at the adjacent binding interface in a clockwise direction. This toxin slowly and reversibly inhibits the ACh-induced response of the human alpha-7/CHRNA7 nAChR subtype (IC(50)=6.2 uM). This Conus princeps (Prince cone) protein is Alpha-conotoxin PiXXA.